Here is a 23-residue protein sequence, read N- to C-terminus: Caerin-4.3 (23 aa).

Expressed by the skin parotoid and/or rostral glands.

Its subcellular location is the secreted. In terms of biological role, antibacterial peptide, that adopts an alpha helical conformation which can disrupt bacterial membranes. Each caerin displays a different antimicrobial specificity. The polypeptide is Caerin-4.3 (Ranoidea caerulea (Green tree frog)).